The chain runs to 793 residues: Probable phosphoketolase (793 aa).

The protein belongs to the XFP family. The cofactor is thiamine diphosphate.

This Gloeobacter violaceus (strain ATCC 29082 / PCC 7421) protein is Probable phosphoketolase.